Here is a 736-residue protein sequence, read N- to C-terminus: uncharacterized protein (736 aa).

ABC transporter domains follow at residues isoleucine 183–glutamate 459 and leucine 518–isoleucine 734. ATP contacts are provided by residues glycine 215 to serine 222 and glycine 551 to serine 558.

This sequence belongs to the ABC transporter superfamily.

The protein resides in the cytoplasm. This is an uncharacterized protein from Schizosaccharomyces pombe (strain 972 / ATCC 24843) (Fission yeast).